The primary structure comprises 310 residues: tRNA dimethylallyltransferase (310 aa).

10 to 17 contributes to the ATP binding site; the sequence is GPTAVGKS. Substrate is bound at residue 12–17; the sequence is TAVGKS. Interaction with substrate tRNA stretches follow at residues 35 to 38, 159 to 163, and 274 to 281; these read DSAQ, QRIQR, and KRQITWLR.

The protein belongs to the IPP transferase family. As to quaternary structure, monomer. Requires Mg(2+) as cofactor.

It catalyses the reaction adenosine(37) in tRNA + dimethylallyl diphosphate = N(6)-dimethylallyladenosine(37) in tRNA + diphosphate. Its function is as follows. Catalyzes the transfer of a dimethylallyl group onto the adenine at position 37 in tRNAs that read codons beginning with uridine, leading to the formation of N6-(dimethylallyl)adenosine (i(6)A). The polypeptide is tRNA dimethylallyltransferase (Halorhodospira halophila (strain DSM 244 / SL1) (Ectothiorhodospira halophila (strain DSM 244 / SL1))).